Consider the following 528-residue polypeptide: GMP synthase [glutamine-hydrolyzing] (528 aa).

The Glutamine amidotransferase type-1 domain occupies 13–204; it reads AIVILDFGSQ…VYHVCGCDPD (192 aa). The active-site Nucleophile is Cys90. Catalysis depends on residues His178 and Glu180. The GMPS ATP-PPase domain maps to 205–403; that stretch reads WTTAAFIDEA…LGLPEEIVRR (199 aa). 232 to 238 provides a ligand contact to ATP; it reads SGGVDSS.

In terms of assembly, homodimer.

It catalyses the reaction XMP + L-glutamine + ATP + H2O = GMP + L-glutamate + AMP + diphosphate + 2 H(+). The protein operates within purine metabolism; GMP biosynthesis; GMP from XMP (L-Gln route): step 1/1. Functionally, catalyzes the synthesis of GMP from XMP. This Synechococcus sp. (strain CC9605) protein is GMP synthase [glutamine-hydrolyzing].